The following is a 548-amino-acid chain: ADP,ATP carrier protein 1 (548 aa).

2 consecutive transmembrane segments (helical) span residues 39–59 (RPVF…YSVS) and 75–95 (SIPY…VFSI). A glycan (N-linked (GlcNAc...) asparagine) is linked at asparagine 101. 8 consecutive transmembrane segments (helical) span residues 107–127 (VFSI…TVLM), 149–169 (MVFM…SWTS), 171–191 (LMYL…FFAL), 204–224 (FIPL…FSMK), 239–259 (LFFR…IYLI), 302–322 (LVLA…MVEA), 350–370 (IQLA…PALI), and 374–394 (GFLY…ASVF). N-linked (GlcNAc...) asparagine glycans are attached at residues asparagine 400 and asparagine 406. Residues 410 to 430 (LGFVSIGENLWLEQLLGAIIV) form a helical membrane-spanning segment. N-linked (GlcNAc...) asparagine glycosylation is present at asparagine 488. Residues 494 to 514 (KAAISSLTIVTVITACWGFAV) form a helical membrane-spanning segment.

Belongs to the ADP/ATP translocase tlc family.

Its subcellular location is the cell membrane. Its function is as follows. ATP transporter involved in the uptake of ATP from the host cell cytoplasm. Provides the microsporidian cell with host ATP in exchange for ADP. This is an obligate exchange system. This energy acquiring activity is an important component of microsporidian parasitism. This is ADP,ATP carrier protein 1 (ANC1) from Paranosema grylli (Microsporidian parasite).